We begin with the raw amino-acid sequence, 49 residues long: Large ribosomal subunit protein bL33B (49 aa).

It belongs to the bacterial ribosomal protein bL33 family.

The protein is Large ribosomal subunit protein bL33B of Lactobacillus delbrueckii subsp. bulgaricus (strain ATCC BAA-365 / Lb-18).